The following is a 405-amino-acid chain: Argininosuccinate synthase (405 aa).

Residues 10-18 and A37 contribute to the ATP site; that span reads AYSGGLDTS. 2 residues coordinate L-citrulline: Y88 and S93. Position 118 (G118) interacts with ATP. Residues T120, N124, and D125 each coordinate L-aspartate. N124 is a binding site for L-citrulline. 5 residues coordinate L-citrulline: R128, S179, S188, E264, and Y276.

It belongs to the argininosuccinate synthase family. Type 1 subfamily. Homotetramer.

The protein resides in the cytoplasm. The enzyme catalyses L-citrulline + L-aspartate + ATP = 2-(N(omega)-L-arginino)succinate + AMP + diphosphate + H(+). The protein operates within amino-acid biosynthesis; L-arginine biosynthesis; L-arginine from L-ornithine and carbamoyl phosphate: step 2/3. The protein is Argininosuccinate synthase of Pseudomonas entomophila (strain L48).